The sequence spans 597 residues: Arginine--tRNA ligase (597 aa).

A 'HIGH' region motif is present at residues 138–148 (ANPTGPMHVGH).

Belongs to the class-I aminoacyl-tRNA synthetase family. In terms of assembly, monomer.

Its subcellular location is the cytoplasm. The catalysed reaction is tRNA(Arg) + L-arginine + ATP = L-arginyl-tRNA(Arg) + AMP + diphosphate. The sequence is that of Arginine--tRNA ligase from Rhodopseudomonas palustris (strain ATCC BAA-98 / CGA009).